Here is an 82-residue protein sequence, read N- to C-terminus: KKEKEQGCYEDFIECLKLYDKEENGTMLLAELQHALLALGENLDDEQVETLFADCMDPEDDEGFIPYSQFVQRLMSDPVVFD.

The region spanning 7 to 42 (GCYEDFIECLKLYDKEENGTMLLAELQHALLALGEN) is the EF-hand domain.

As to quaternary structure, myosin is a hexamer of 2 heavy chains and 4 light chains.

This is Myosin light chain alkali (Mlc1) from Drosophila teissieri (Fruit fly).